The sequence spans 139 residues: Autophagy-related protein 31 (139 aa).

Belongs to the ATG31 family. In terms of assembly, forms a stable complex with ATG17 and ATG29. Interacts directly with ATG29. The ATG17-ATG29-ATG31 complex interacts with the ATG1-ATG13 complex. Note=The interaction with the ATG1-ATG13 complex is induced by starvation.

It is found in the preautophagosomal structure. Its function is as follows. Plays a role in starvation-induced autophagy. Involved in mitophagy. Functions with ATG17 and ATG29 at the preautophagosomal structure (PAS) in order to form normal autophagosomes under starvation conditions. The protein is Autophagy-related protein 31 of Kluyveromyces marxianus (strain DMKU3-1042 / BCC 29191 / NBRC 104275) (Yeast).